A 347-amino-acid polypeptide reads, in one-letter code: Heme A synthase (347 aa).

The next 8 membrane-spanning stretches (helical) occupy residues 17–37 (LANW…VGGI), 106–126 (GIGA…AIPA), 132–152 (MIGI…MVYS), 165–185 (LATH…TVLD), 202–222 (ALAI…AFVA), 260–280 (IVVQ…ALAV), 295–315 (AVAT…LTGV), and 317–337 (IAVA…LLWA). His-266 lines the heme pocket. His-323 contacts heme.

The protein belongs to the COX15/CtaA family. Type 2 subfamily. As to quaternary structure, interacts with CtaB. Heme b serves as cofactor.

The protein localises to the cell membrane. The enzyme catalyses Fe(II)-heme o + 2 A + H2O = Fe(II)-heme a + 2 AH2. Its pathway is porphyrin-containing compound metabolism; heme A biosynthesis; heme A from heme O: step 1/1. Catalyzes the conversion of heme O to heme A by two successive hydroxylations of the methyl group at C8. The first hydroxylation forms heme I, the second hydroxylation results in an unstable dihydroxymethyl group, which spontaneously dehydrates, resulting in the formyl group of heme A. In Rhizorhabdus wittichii (strain DSM 6014 / CCUG 31198 / JCM 15750 / NBRC 105917 / EY 4224 / RW1) (Sphingomonas wittichii), this protein is Heme A synthase.